The chain runs to 364 residues: GMP reductase (364 aa).

NADP(+)-binding positions include 26 to 27 (SR), Lys78, 132 to 134 (DVA), and 183 to 184 (IG). Gly184, Gly186, and Cys189 together coordinate K(+). The active-site Thioimidate intermediate is the Cys189. Residue Thr191 is the Proton donor/acceptor of the active site. Arg192 contributes to the K(+) binding site. GMP contacts are provided by residues 222–224 (DGG), 245–246 (GG), 271–273 (GMS), and 289–293 (RASEG). Residues Met272, 288–289 (YR), and 317–320 (SACT) each bind NADP(+).

Belongs to the IMPDH/GMPR family. GuaC type 1 subfamily. As to quaternary structure, homotetramer.

The enzyme catalyses IMP + NH4(+) + NADP(+) = GMP + NADPH + 2 H(+). Functionally, catalyzes the irreversible NADPH-dependent deamination of GMP to IMP. It functions in the conversion of nucleobase, nucleoside and nucleotide derivatives of G to A nucleotides, and in maintaining the intracellular balance of A and G nucleotides. The sequence is that of GMP reductase (gmr-1) from Onchocerca volvulus.